Here is an 82-residue protein sequence, read N- to C-terminus: Small ribosomal subunit protein eS21 (82 aa).

Belongs to the eukaryotic ribosomal protein eS21 family.

In Oryza sativa subsp. japonica (Rice), this protein is Small ribosomal subunit protein eS21 (RPS21).